Consider the following 246-residue polypeptide: Protein SRL3 (246 aa).

Positions 49-61 (SISEAQDSPTSAP) are enriched in polar residues. 2 disordered regions span residues 49-68 (SISEAQDSPTSAPSPDGNED) and 200-229 (HAKSNRVDNVNVSPLRWSSHRRTQSTQENS). S212 carries the post-translational modification Phosphoserine.

In terms of assembly, interacts with CLN2. Post-translationally, phosphorylated by CDC28, probably in association with G1 cyclin CLN2.

The protein localises to the cytoplasm. Functionally, weakly suppresses a RAD53 null mutation when overexpressed. The chain is Protein SRL3 (SRL3) from Saccharomyces cerevisiae (strain ATCC 204508 / S288c) (Baker's yeast).